Consider the following 126-residue polypeptide: Small ribosomal subunit protein eS24 (126 aa).

Residues 98-126 (LYTKPQTSRKQRKEKKNRLKKAGKKTAKK) are disordered. Over residues 104–126 (TSRKQRKEKKNRLKKAGKKTAKK) the composition is skewed to basic residues.

The protein belongs to the eukaryotic ribosomal protein eS24 family.

This is Small ribosomal subunit protein eS24 (rps24) from Dictyostelium discoideum (Social amoeba).